The following is a 141-amino-acid chain: MKTARRRSRELAVQAVYQSLINRTAAPEIAKNIREMSDFAKADEELFNKLFFGTQTNAAEYIRQIRPLLDRDEKDLNPIERAVLLTACHELSAMPETPYPVIINEAIEVTKTFGGTDGHKFVNGILDKLAAQIRPDEPKRR.

The protein belongs to the NusB family.

Its function is as follows. Involved in transcription antitermination. Required for transcription of ribosomal RNA (rRNA) genes. Binds specifically to the boxA antiterminator sequence of the ribosomal RNA (rrn) operons. This Neisseria meningitidis serogroup B (strain ATCC BAA-335 / MC58) protein is Transcription antitermination protein NusB.